The following is a 223-amino-acid chain: Ribosomal RNA small subunit methyltransferase G (223 aa).

S-adenosyl-L-methionine-binding positions include Gly84, Leu89, 135 to 136, and Arg150; that span reads VE.

This sequence belongs to the methyltransferase superfamily. RNA methyltransferase RsmG family.

Its subcellular location is the cytoplasm. The catalysed reaction is guanosine(527) in 16S rRNA + S-adenosyl-L-methionine = N(7)-methylguanosine(527) in 16S rRNA + S-adenosyl-L-homocysteine. Its function is as follows. Specifically methylates the N7 position of guanine in position 527 of 16S rRNA. This is Ribosomal RNA small subunit methyltransferase G from Saccharophagus degradans (strain 2-40 / ATCC 43961 / DSM 17024).